The following is a 629-amino-acid chain: tRNA uridine 5-carboxymethylaminomethyl modification enzyme MnmG (629 aa).

13 to 18 (GGGHAG) contributes to the FAD binding site. An NAD(+)-binding site is contributed by 273–287 (GPRYCPSIEDKINRF).

The protein belongs to the MnmG family. As to quaternary structure, homodimer. Heterotetramer of two MnmE and two MnmG subunits. The cofactor is FAD.

Its subcellular location is the cytoplasm. Functionally, NAD-binding protein involved in the addition of a carboxymethylaminomethyl (cmnm) group at the wobble position (U34) of certain tRNAs, forming tRNA-cmnm(5)s(2)U34. In Shewanella piezotolerans (strain WP3 / JCM 13877), this protein is tRNA uridine 5-carboxymethylaminomethyl modification enzyme MnmG.